The following is a 116-amino-acid chain: Large ribosomal subunit protein bL17 (116 aa).

This sequence belongs to the bacterial ribosomal protein bL17 family. Part of the 50S ribosomal subunit. Contacts protein L32.

In Dictyoglomus turgidum (strain DSM 6724 / Z-1310), this protein is Large ribosomal subunit protein bL17.